The following is a 179-amino-acid chain: Large ribosomal subunit protein uL6 (179 aa).

This sequence belongs to the universal ribosomal protein uL6 family. In terms of assembly, part of the 50S ribosomal subunit.

Its function is as follows. This protein binds to the 23S rRNA, and is important in its secondary structure. It is located near the subunit interface in the base of the L7/L12 stalk, and near the tRNA binding site of the peptidyltransferase center. The sequence is that of Large ribosomal subunit protein uL6 from Bacillus velezensis (strain DSM 23117 / BGSC 10A6 / LMG 26770 / FZB42) (Bacillus amyloliquefaciens subsp. plantarum).